The chain runs to 737 residues: Transcription termination factor Rho (737 aa).

The disordered stretch occupies residues 1–396 (MSGPCSAHRV…ENSYLPDPTD (396 aa)). Low complexity-rich tracts occupy residues 16 to 28 (RPTI…TRSS), 62 to 86 (ASRA…GSDA), and 101 to 111 (DAESAPTAADT). Basic and acidic residues-rich tracts occupy residues 145–175 (PRAE…HESR), 196–256 (SMER…DRRD), 266–279 (GRPD…DRHQ), and 286–324 (DRSH…DRGG). Residues 328–339 (RNGRRGRNRFRR) are compositionally biased toward basic residues. A compositionally biased stretch (polar residues) spans 347–360 (APISGSHAPSQGSP). The region spanning 367–439 (EGTMAGWFDP…IEVQTLNDGS (73 aa)) is the Rho RNA-BD domain. A compositionally biased stretch (basic and acidic residues) spans 376 to 387 (PSRDGGFLRRPE). ATP is bound by residues 487-492 (GYGQRA), 499-504 (RAGKTT), and Arg-530.

The protein belongs to the Rho family. Homohexamer. The homohexamer assembles into an open ring structure.

Its function is as follows. Facilitates transcription termination by a mechanism that involves Rho binding to the nascent RNA, activation of Rho's RNA-dependent ATPase activity, and release of the mRNA from the DNA template. The chain is Transcription termination factor Rho from Gemmatimonas aurantiaca (strain DSM 14586 / JCM 11422 / NBRC 100505 / T-27).